The following is a 107-amino-acid chain: Anaphase-promoting complex subunit 14 (107 aa).

As to quaternary structure, the APC/C is composed of at least 13 subunits: apc1, apc2, nuc2, apc4, apc5, cut9, apc8, apc10, apc11, hcn1, apc13, apc14 and apc15.

It is found in the ascus epiplasm. In terms of biological role, component of the anaphase promoting complex/cyclosome (APC/C), a cell cycle-regulated E3 ubiquitin-protein ligase complex that controls progression through mitosis and the G1 phase of the cell cycle. The APC/C is thought to confer substrate specificity and, in the presence of ubiquitin-conjugating E2 enzymes, it catalyzes the formation of protein-ubiquitin conjugates that are subsequently degraded by the 26S proteasome. Appears to play a role in spore wall formation. This chain is Anaphase-promoting complex subunit 14, found in Schizosaccharomyces pombe (strain 972 / ATCC 24843) (Fission yeast).